The following is a 239-amino-acid chain: Enolase-phosphatase E1 (239 aa).

Mg(2+) is bound by residues aspartate 13 and glutamate 15. Residues 133 to 134 (SS) and lysine 170 each bind substrate. Aspartate 196 contributes to the Mg(2+) binding site.

Belongs to the HAD-like hydrolase superfamily. MasA/MtnC family. In terms of assembly, monomer. Requires Mg(2+) as cofactor.

It is found in the cytoplasm. Its subcellular location is the nucleus. The enzyme catalyses 5-methylsulfanyl-2,3-dioxopentyl phosphate + H2O = 1,2-dihydroxy-5-(methylsulfanyl)pent-1-en-3-one + phosphate. Its pathway is amino-acid biosynthesis; L-methionine biosynthesis via salvage pathway; L-methionine from S-methyl-5-thio-alpha-D-ribose 1-phosphate: step 3/6. It participates in amino-acid biosynthesis; L-methionine biosynthesis via salvage pathway; L-methionine from S-methyl-5-thio-alpha-D-ribose 1-phosphate: step 4/6. Its function is as follows. Bifunctional enzyme that catalyzes the enolization of 2,3-diketo-5-methylthiopentyl-1-phosphate (DK-MTP-1-P) into the intermediate 2-hydroxy-3-keto-5-methylthiopentenyl-1-phosphate (HK-MTPenyl-1-P), which is then dephosphorylated to form the acireductone 1,2-dihydroxy-3-keto-5-methylthiopentene (DHK-MTPene). The chain is Enolase-phosphatase E1 from Chaetomium globosum (strain ATCC 6205 / CBS 148.51 / DSM 1962 / NBRC 6347 / NRRL 1970) (Soil fungus).